The sequence spans 307 residues: ATP-dependent (S)-NAD(P)H-hydrate dehydratase (307 aa).

The region spanning 1-291 (MDHFLKLLPK…DEIPKLVRDV (291 aa)) is the YjeF C-terminal domain. Residues glycine 96 and 150-156 (NIVEFSR) contribute to the (6S)-NADPHX site. ATP is bound by residues 194–198 (KGEVD) and 214–223 (SSLRRCGGQG). Aspartate 224 is a binding site for (6S)-NADPHX.

This sequence belongs to the NnrD/CARKD family. Requires Mg(2+) as cofactor.

The catalysed reaction is (6S)-NADHX + ATP = ADP + phosphate + NADH + H(+). It carries out the reaction (6S)-NADPHX + ATP = ADP + phosphate + NADPH + H(+). Functionally, catalyzes the dehydration of the S-form of NAD(P)HX at the expense of ATP, which is converted to ADP. Together with NAD(P)HX epimerase, which catalyzes the epimerization of the S- and R-forms, the enzyme allows the repair of both epimers of NAD(P)HX, a damaged form of NAD(P)H that is a result of enzymatic or heat-dependent hydration. This chain is ATP-dependent (S)-NAD(P)H-hydrate dehydratase, found in Caenorhabditis briggsae.